The sequence spans 445 residues: Phosphoglucosamine mutase (445 aa).

Catalysis depends on S102, which acts as the Phosphoserine intermediate. Mg(2+) contacts are provided by S102, D241, D243, and D245. S102 is subject to Phosphoserine.

The protein belongs to the phosphohexose mutase family. Requires Mg(2+) as cofactor. Activated by phosphorylation.

The enzyme catalyses alpha-D-glucosamine 1-phosphate = D-glucosamine 6-phosphate. Its function is as follows. Catalyzes the conversion of glucosamine-6-phosphate to glucosamine-1-phosphate. The sequence is that of Phosphoglucosamine mutase from Novosphingobium aromaticivorans (strain ATCC 700278 / DSM 12444 / CCUG 56034 / CIP 105152 / NBRC 16084 / F199).